The sequence spans 378 residues: MKLKEVTEGKVRIFVPDPKEYMIEGKFDPSWAPVFYNPKMTFNRDLSVIVVSLLKPKIILDALSATGIRGIRYYVESWKSEQLILNDKNSTAASLIQINVKNNGIENAKIYNKDANALLYEIKSEYIDIDPFGSPVPFILSSINATIRNGIVAFTATDLSPLEGSSRTSCRRKYDAINYKLSSSKELGLRILIGKIIREAATLEKTVHPLFSFYADYYYRLFVIVESGARKADENINKNLKYFGECPRCGFQTFVDENCKTKCPICGENFIIIGPLYIGPLHNMEFLKRMIDTYSDFNYLSSFNRIQKLLNVIEKEAKYKSVFYNISKLASKLKVSAIPPIDSILECLGDASKTHFAPTGIRTDKGYEEIIRCVKSLR.

The Trm1 methyltransferase domain occupies 4 to 374 (KEVTEGKVRI…KGYEEIIRCV (371 aa)). 5 residues coordinate S-adenosyl-L-methionine: Arg-44, Arg-69, Asp-87, Asp-114, and Ala-115. Zn(2+)-binding residues include Cys-246, Cys-249, Cys-263, and Cys-266.

The protein belongs to the class I-like SAM-binding methyltransferase superfamily. Trm1 family.

It carries out the reaction guanosine(26) in tRNA + 2 S-adenosyl-L-methionine = N(2)-dimethylguanosine(26) in tRNA + 2 S-adenosyl-L-homocysteine + 2 H(+). Its function is as follows. Dimethylates a single guanine residue at position 26 of a number of tRNAs using S-adenosyl-L-methionine as donor of the methyl groups. The polypeptide is tRNA (guanine(26)-N(2))-dimethyltransferase (Saccharolobus islandicus (strain M.14.25 / Kamchatka #1) (Sulfolobus islandicus)).